The following is a 211-amino-acid chain: MTNCTVLDWQGKEAGESSIDLKTAKESSAADLLHRAVLRQQAHSRQGTASTLTRSEVRGGGRKPYKQKGTGRARQGSIRTPLRPGGGIIFGPKPRKYNLEMNRKERRLALRTALMSRIPDAKIIKDFGSKLEVPKTSEIVALLKRVGIDSDVKILIILNKPSEIIKRSIKNLEKVKLISADQLNVFDLLNANSLVIGEDALSTIKEVYGND.

The disordered stretch occupies residues 40-85 (QQAHSRQGTASTLTRSEVRGGGRKPYKQKGTGRARQGSIRTPLRPG). A compositionally biased stretch (polar residues) spans 41–54 (QAHSRQGTASTLTR). Residues 60-71 (GGRKPYKQKGTG) are compositionally biased toward basic residues.

The protein belongs to the universal ribosomal protein uL4 family. Part of the 50S ribosomal subunit.

In terms of biological role, one of the primary rRNA binding proteins, this protein initially binds near the 5'-end of the 23S rRNA. It is important during the early stages of 50S assembly. It makes multiple contacts with different domains of the 23S rRNA in the assembled 50S subunit and ribosome. Its function is as follows. Forms part of the polypeptide exit tunnel. The polypeptide is Large ribosomal subunit protein uL4 (Prochlorococcus marinus (strain NATL2A)).